Reading from the N-terminus, the 155-residue chain is Ribosomal RNA large subunit methyltransferase H (155 aa).

S-adenosyl-L-methionine contacts are provided by residues Leu-72, Gly-103, and 122 to 127 (LSPLTF).

This sequence belongs to the RNA methyltransferase RlmH family. Homodimer.

The protein localises to the cytoplasm. It carries out the reaction pseudouridine(1915) in 23S rRNA + S-adenosyl-L-methionine = N(3)-methylpseudouridine(1915) in 23S rRNA + S-adenosyl-L-homocysteine + H(+). Functionally, specifically methylates the pseudouridine at position 1915 (m3Psi1915) in 23S rRNA. This is Ribosomal RNA large subunit methyltransferase H from Alkalilimnicola ehrlichii (strain ATCC BAA-1101 / DSM 17681 / MLHE-1).